The primary structure comprises 378 residues: Chaperone protein DnaJ 2 (378 aa).

Residues 4 to 68 enclose the J domain; the sequence is DYYAVLGVRR…QKKQVYDLGG (65 aa). The CR-type zinc-finger motif lies at 130 to 212; the sequence is GTTKDIQVET…CAGDGRVRSR (83 aa). Residues cysteine 143, cysteine 146, cysteine 160, cysteine 163, cysteine 186, cysteine 189, cysteine 200, and cysteine 203 each coordinate Zn(2+). 4 CXXCXGXG motif repeats span residues 143 to 150, 160 to 167, 186 to 193, and 200 to 207; these read CTTCSGEG, CDMCRGRG, CPQCQGFG, and CPECAGDG. The tract at residues 351–378 is disordered; that stretch reads RGEERPTGQFQPGQQGLFSRLKDAFNGR. Polar residues predominate over residues 358-367; sequence GQFQPGQQGL.

Belongs to the DnaJ family. As to quaternary structure, homodimer. The cofactor is Zn(2+).

It is found in the cytoplasm. Its function is as follows. Participates actively in the response to hyperosmotic and heat shock by preventing the aggregation of stress-denatured proteins and by disaggregating proteins, also in an autonomous, DnaK-independent fashion. Unfolded proteins bind initially to DnaJ; upon interaction with the DnaJ-bound protein, DnaK hydrolyzes its bound ATP, resulting in the formation of a stable complex. GrpE releases ADP from DnaK; ATP binding to DnaK triggers the release of the substrate protein, thus completing the reaction cycle. Several rounds of ATP-dependent interactions between DnaJ, DnaK and GrpE are required for fully efficient folding. Also involved, together with DnaK and GrpE, in the DNA replication of plasmids through activation of initiation proteins. The sequence is that of Chaperone protein DnaJ 2 from Streptomyces avermitilis (strain ATCC 31267 / DSM 46492 / JCM 5070 / NBRC 14893 / NCIMB 12804 / NRRL 8165 / MA-4680).